Here is a 165-residue protein sequence, read N- to C-terminus: Putative pre-16S rRNA nuclease (165 aa).

Belongs to the YqgF nuclease family.

The protein resides in the cytoplasm. Its function is as follows. Could be a nuclease involved in processing of the 5'-end of pre-16S rRNA. The polypeptide is Putative pre-16S rRNA nuclease (Beijerinckia indica subsp. indica (strain ATCC 9039 / DSM 1715 / NCIMB 8712)).